Consider the following 274-residue polypeptide: Thiamine kinase (274 aa).

Belongs to the thiamine kinase family.

The catalysed reaction is thiamine + ATP = thiamine phosphate + ADP + H(+). It participates in cofactor biosynthesis; thiamine diphosphate biosynthesis; thiamine phosphate from thiamine: step 1/1. Functionally, catalyzes the ATP-dependent phosphorylation of thiamine to thiamine phosphate. Is involved in thiamine salvage. The polypeptide is Thiamine kinase (Salmonella heidelberg (strain SL476)).